The chain runs to 733 residues: MTPLPERAAALPGIDDAVLHAVATGSYHDPHSVLGQHQVAAAGIADPVTVIRTLRPLAEAVFAVLPTGAYLELAHLAHGIWQGVDIAGPGAYEIEARYADGSAWSADDPYRFLPTIGELDLHLIREGRHERLWTALGARLRDLGGVTGTAFTVWAPHARAVRVVGDFNGWDGTLHSLRNMGSSGVWELFVPGVGEGAIYKFDLLAQSGDWVRKIDPMAQLAETPPDTASRIAVSRHEWQDGEWMRRRAASDPHTGPMSIYELHFGSWRPDLGYREAADQLIDYLGALGYTHVEFLPLAEHPFGGSWGYQVTGYYAPTSRFGSPDDLKYLIDRLHRAGIGVLLDWVPGHFPKDDWALARFDGQPLYEHADPRRGEHADWGTYVFDYGNSQVRNFLVANALYWLEEFHIDGLRVDAVASMLYLDYSRDADGWEPNIHGGRENLEAIAFLQEVTATAYKRNPGTIVIAEESTSYPGVTAPTSSGGLGFGLKWNMGWMHDSLQYIREDPLYRSWHHSRITFSFVYAWSESFLLPISHDEVVHGKGSLLGKMPGDHWQQLANMRAYLAFMWAHPGKQLLFMGQEFGQPSEWSEERGLDWWILDQPAHRGLWNLVCELNAVYRGAPALWAHDNDPSGFEWLDGSDAAGNVLAFLRKDGRGEPIAVILNFSGAPHTEYRVGLPFAGGWEELLNTDADVFGGSGVGNFGGVTAVEEPWMGSPASAVLTLPPLGALFLKTGR.

The active-site Nucleophile is the aspartate 413. Catalysis depends on glutamate 466, which acts as the Proton donor.

This sequence belongs to the glycosyl hydrolase 13 family. GlgB subfamily. Monomer.

The enzyme catalyses Transfers a segment of a (1-&gt;4)-alpha-D-glucan chain to a primary hydroxy group in a similar glucan chain.. It participates in glycan biosynthesis; glycogen biosynthesis. Its function is as follows. Catalyzes the formation of the alpha-1,6-glucosidic linkages in glycogen by scission of a 1,4-alpha-linked oligosaccharide from growing alpha-1,4-glucan chains and the subsequent attachment of the oligosaccharide to the alpha-1,6 position. This chain is 1,4-alpha-glucan branching enzyme GlgB, found in Leifsonia xyli subsp. xyli (strain CTCB07).